The primary structure comprises 268 residues: Aminoglycoside 3'-phosphotransferase (268 aa).

Asp188 (proton acceptor) is an active-site residue.

It belongs to the aminoglycoside phosphotransferase family.

It catalyses the reaction kanamycin A + ATP = kanamycin 3'-phosphate + ADP + H(+). Functionally, resistance to kanamycin and structurally-related aminoglycosides, including amikacin. The protein is Aminoglycoside 3'-phosphotransferase (aph) of Streptomyces fradiae (Streptomyces roseoflavus).